The sequence spans 501 residues: DEAD-box ATP-dependent RNA helicase 20 (501 aa).

Basic and acidic residues-rich tracts occupy residues 1–20 and 38–53; these read MSRYDSRTGDSTSYRDRRSD and SKKDNDGNESPRKLDL. Positions 1 to 53 are disordered; it reads MSRYDSRTGDSTSYRDRRSDSGFGGTSSYGSSGSHTSSKKDNDGNESPRKLDL. Residues 99 to 127 carry the Q motif motif; it reads KSFRDVGFPDYVLEEVKKAGFTEPTPIQS. In terms of domain architecture, Helicase ATP-binding spans 130–305; that stretch reads WPMAMKGRDL…KKFLYNPYKV (176 aa). 143–150 provides a ligand contact to ATP; sequence AETGSGKT. The DEAD box signature appears at 253–256; that stretch reads DEAD. One can recognise a Helicase C-terminal domain in the interval 333 to 478; that stretch reads KLVKLLEDIM…KVSPELASMG (146 aa). A disordered region spans residues 473 to 501; sequence ELASMGRSTAPPPPGLGGFRDRGSRRGWS. Positions 491–501 are enriched in basic and acidic residues; it reads FRDRGSRRGWS.

This sequence belongs to the DEAD box helicase family. DDX5/DBP2 subfamily.

The protein localises to the nucleus. The enzyme catalyses ATP + H2O = ADP + phosphate + H(+). ATP-dependent RNA helicase involved nonsense-mediated mRNA decay and ribosome biogenesis through rRNA processing. The protein is DEAD-box ATP-dependent RNA helicase 20 (RH20) of Arabidopsis thaliana (Mouse-ear cress).